Reading from the N-terminus, the 354-residue chain is 3'-5' exonuclease (354 aa).

Residues 1–120 (MEKYLIKMPI…PSPEKEKPEK (120 aa)) are disordered. The segment covering 36-50 (TKKDTPKELKDKENA) has biased composition (basic and acidic residues). The span at 59-70 (TKGRPGRPAVKR) shows a compositional bias: basic residues. Positions 71 to 91 (KNLDNPDAKAEKKATEEENPP) are enriched in basic and acidic residues. Residues Ser104, Ser110, and Ser112 each carry the phosphoserine modification. Residues 146-314 (VLQWVEKQKD…GQVIYRELER (169 aa)) enclose the 3'-5' exonuclease domain. Residues Asp163, Glu165, and Asp301 each contribute to the Mg(2+) site.

This sequence belongs to the WRNexo family.

It is found in the nucleus. Functionally, has exonuclease activity on both single-stranded and duplex templates bearing overhangs, but not blunt ended duplex DNA, and cleaves in a 3'-5' direction. Essential for the formation of DNA replication focal centers. Has an important role in maintaining genome stability. The sequence is that of 3'-5' exonuclease from Drosophila yakuba (Fruit fly).